The chain runs to 630 residues: FAST kinase domain-containing protein 4 (630 aa).

The 59-residue stretch at 560 to 618 folds into the RAP domain; the sequence is IAFLRWEFPNFNSRSKDLLGRFVLARRHVLAAGFLVVDVPYYEWLDLKSEWQKSAYLKD.

Belongs to the FAST kinase family. Expression detected in spleen, testis, colon, heart, smooth muscle, kidney, brain, lung, liver, brown and white adipose tissue with highest expression in testis, heart, smooth muscle and brown adipose tissue.

It is found in the mitochondrion matrix. Plays a role in processing of mitochondrial RNA precursors and in stabilization of a subset of mature mitochondrial RNA species, such as MT-CO1, MT-CO2, MT-CYB, MT-CO3, MT-ND3, MT-ND5 and MT-ATP8/6. May play a role in cell cycle progression. The protein is FAST kinase domain-containing protein 4 (Tbrg4) of Mus musculus (Mouse).